We begin with the raw amino-acid sequence, 116 residues long: Fluoride-specific ion channel FluC 2 (116 aa).

2 consecutive transmembrane segments (helical) span residues 3-23 (LLTA…RYAV) and 43-63 (LLFG…AVTV). Na(+) is bound by residues glycine 67 and threonine 70. The chain crosses the membrane as a helical span at residues 96 to 116 (VGTLAAALLAVFLGIALGAAL).

Belongs to the fluoride channel Fluc/FEX (TC 1.A.43) family.

Its subcellular location is the cell membrane. It carries out the reaction fluoride(in) = fluoride(out). With respect to regulation, na(+) is not transported, but it plays an essential structural role and its presence is essential for fluoride channel function. Fluoride-specific ion channel. Important for reducing fluoride concentration in the cell, thus reducing its toxicity. This Natronomonas pharaonis (strain ATCC 35678 / DSM 2160 / CIP 103997 / JCM 8858 / NBRC 14720 / NCIMB 2260 / Gabara) (Halobacterium pharaonis) protein is Fluoride-specific ion channel FluC 2.